The primary structure comprises 201 residues: Peptidyl-tRNA hydrolase (201 aa).

Tyr17 contributes to the tRNA binding site. Catalysis depends on His22, which acts as the Proton acceptor. TRNA contacts are provided by Tyr68, Asn70, and Asn116.

This sequence belongs to the PTH family. As to quaternary structure, monomer.

Its subcellular location is the cytoplasm. The catalysed reaction is an N-acyl-L-alpha-aminoacyl-tRNA + H2O = an N-acyl-L-amino acid + a tRNA + H(+). Its function is as follows. Hydrolyzes ribosome-free peptidyl-tRNAs (with 1 or more amino acids incorporated), which drop off the ribosome during protein synthesis, or as a result of ribosome stalling. Functionally, catalyzes the release of premature peptidyl moieties from peptidyl-tRNA molecules trapped in stalled 50S ribosomal subunits, and thus maintains levels of free tRNAs and 50S ribosomes. This Lawsonia intracellularis (strain PHE/MN1-00) protein is Peptidyl-tRNA hydrolase.